The following is a 594-amino-acid chain: Membrane protein insertase YidC (594 aa).

Residues tyrosine 7 to serine 27 traverse the membrane as a helical segment. The interval alanine 36–arginine 73 is disordered. Residues alanine 37–alanine 65 are compositionally biased toward low complexity. 4 helical membrane-spanning segments follow: residues leucine 369 to phenylalanine 389, tryptophan 443 to isoleucine 463, leucine 488 to isoleucine 508, and phenylalanine 532 to isoleucine 552.

This sequence belongs to the OXA1/ALB3/YidC family. Type 1 subfamily. Interacts with the Sec translocase complex via SecD. Specifically interacts with transmembrane segments of nascent integral membrane proteins during membrane integration.

The protein localises to the cell inner membrane. Its function is as follows. Required for the insertion and/or proper folding and/or complex formation of integral membrane proteins into the membrane. Involved in integration of membrane proteins that insert both dependently and independently of the Sec translocase complex, as well as at least some lipoproteins. Aids folding of multispanning membrane proteins. This is Membrane protein insertase YidC from Rhizobium meliloti (strain 1021) (Ensifer meliloti).